The primary structure comprises 899 residues: Protein translocase subunit SecA (899 aa).

ATP is bound by residues Q89, 107–111 (GEGKT), and D502. Residues C882, C884, C893, and H894 each coordinate Zn(2+).

The protein belongs to the SecA family. As to quaternary structure, monomer and homodimer. Part of the essential Sec protein translocation apparatus which comprises SecA, SecYEG and auxiliary proteins SecDF-YajC and YidC. Zn(2+) serves as cofactor.

It is found in the cell inner membrane. It localises to the cytoplasm. It carries out the reaction ATP + H2O + cellular proteinSide 1 = ADP + phosphate + cellular proteinSide 2.. In terms of biological role, part of the Sec protein translocase complex. Interacts with the SecYEG preprotein conducting channel. Has a central role in coupling the hydrolysis of ATP to the transfer of proteins into and across the cell membrane, serving both as a receptor for the preprotein-SecB complex and as an ATP-driven molecular motor driving the stepwise translocation of polypeptide chains across the membrane. This Allorhizobium ampelinum (strain ATCC BAA-846 / DSM 112012 / S4) (Agrobacterium vitis (strain S4)) protein is Protein translocase subunit SecA.